We begin with the raw amino-acid sequence, 154 residues long: Cytochrome c-type biogenesis protein CcmE (154 aa).

Over 1–7 the chain is Cytoplasmic; the sequence is MKPRQKR. A helical; Signal-anchor for type II membrane protein transmembrane segment spans residues 8–28; the sequence is LVLIVGIVAAVGVAAALVLNA. At 29–154 the chain is on the periplasmic side; sequence FQSNLVFFYS…GETVVKETRP (126 aa). Positions 121 and 125 each coordinate heme. The interval 131–154 is disordered; the sequence is AEALQRAGASNQKLGETVVKETRP.

It belongs to the CcmE/CycJ family.

Its subcellular location is the cell inner membrane. Functionally, heme chaperone required for the biogenesis of c-type cytochromes. Transiently binds heme delivered by CcmC and transfers the heme to apo-cytochromes in a process facilitated by CcmF and CcmH. The sequence is that of Cytochrome c-type biogenesis protein CcmE from Methylibium petroleiphilum (strain ATCC BAA-1232 / LMG 22953 / PM1).